The sequence spans 190 residues: Peptidyl-tRNA hydrolase (190 aa).

Tyrosine 14 serves as a coordination point for tRNA. The active-site Proton acceptor is the histidine 19. Tyrosine 64, asparagine 66, and asparagine 112 together coordinate tRNA.

This sequence belongs to the PTH family. As to quaternary structure, monomer.

The protein localises to the cytoplasm. It catalyses the reaction an N-acyl-L-alpha-aminoacyl-tRNA + H2O = an N-acyl-L-amino acid + a tRNA + H(+). In terms of biological role, hydrolyzes ribosome-free peptidyl-tRNAs (with 1 or more amino acids incorporated), which drop off the ribosome during protein synthesis, or as a result of ribosome stalling. Catalyzes the release of premature peptidyl moieties from peptidyl-tRNA molecules trapped in stalled 50S ribosomal subunits, and thus maintains levels of free tRNAs and 50S ribosomes. This Chlorobium phaeobacteroides (strain DSM 266 / SMG 266 / 2430) protein is Peptidyl-tRNA hydrolase.